The chain runs to 394 residues: L-lactate dehydrogenase (394 aa).

Residues 1 to 380 enclose the FMN hydroxy acid dehydrogenase domain; it reads MIISAASDYR…SRDSLVQNAE (380 aa). Tyr24 serves as a coordination point for substrate. Ser106 and Gln127 together coordinate FMN. Tyr129 provides a ligand contact to substrate. An FMN-binding site is contributed by Thr155. Position 164 (Arg164) interacts with substrate. Residue Lys251 participates in FMN binding. His275 acts as the Proton acceptor in catalysis. Position 278 (Arg278) interacts with substrate. 306–330 is a binding site for FMN; it reads DSGIRNGLDVVRMIALGADSVLLGR.

The protein belongs to the FMN-dependent alpha-hydroxy acid dehydrogenase family. It depends on FMN as a cofactor.

The protein resides in the cell inner membrane. It carries out the reaction (S)-lactate + A = pyruvate + AH2. In terms of biological role, catalyzes the conversion of L-lactate to pyruvate. Is coupled to the respiratory chain. The chain is L-lactate dehydrogenase from Klebsiella pneumoniae (strain 342).